The chain runs to 351 residues: Trace amine-associated receptor 2 (351 aa).

The Extracellular segment spans residues 1 to 48; it reads MAVSSEQHELSHFKRTQTKKEKFNCSEYGNRSCPENERSLGVRVAMYS. N-linked (GlcNAc...) asparagine glycans are attached at residues Asn-24 and Asn-30. 2 cysteine pairs are disulfide-bonded: Cys-33/Cys-197 and Cys-116/Cys-201. Residues 49-69 form a helical membrane-spanning segment; that stretch reads FMAGSIFITIFGNLAMIISIS. Topologically, residues 70–79 are cytoplasmic; sequence YFKQLHTPTN. A helical membrane pass occupies residues 80–100; sequence FLILSMAITDFLLGFTIMPYS. The Extracellular portion of the chain corresponds to 101 to 118; it reads MIRSVENCWYFGLTFCKI. A helical membrane pass occupies residues 119 to 139; it reads YYSFDLMLSITSIFHLCSVAI. The Cytoplasmic segment spans residues 140–162; it reads DRFYAICYPLLYSTKITIPVIKR. Residues 163–183 form a helical membrane-spanning segment; sequence LLLLCWSVPGAFAFGVVFSEA. At 184–207 the chain is on the extracellular side; sequence YADGIEGYDILVACSSSCPVMFNK. A helical membrane pass occupies residues 208–228; sequence LWGTTLFMAGFFTPGSMMVGI. Topologically, residues 229-263 are cytoplasmic; it reads YGKIFAVSRKHAHAINNLRENQNNQVKKDKKAAKT. Residues 264–284 form a helical membrane-spanning segment; that stretch reads LGIVIGVFLLCWFPCFFTILL. Residues 285–299 lie on the Extracellular side of the membrane; sequence DPFLNFSTPVVLFDA. N-linked (GlcNAc...) asparagine glycosylation occurs at Asn-289. A helical membrane pass occupies residues 300 to 322; sequence LTWFGYFNSTCNPLIYGFFYPWF. At 323 to 351 the chain is on the cytoplasmic side; sequence RRALKYILLGKIFSSCFHNTILCMQKESE.

Belongs to the G-protein coupled receptor 1 family. In terms of tissue distribution, not expressed in the pons, thalamus, hypothalamus, hippocampus, caudate, putamen, frontal cortex, basal forebrain, midbrain or liver.

Its subcellular location is the cell membrane. Functionally, orphan olfactory receptor specific for trace amines. Trace amine compounds are enriched in animal body fluids and act on trace amine-associated receptors (TAARs) to elicit both intraspecific and interspecific innate behaviors. Ligand-binding causes a conformation change that triggers signaling via the G(s)-class of G-proteins which activate adenylate cyclase. The protein is Trace amine-associated receptor 2 of Homo sapiens (Human).